The primary structure comprises 132 residues: Proline-rich protein sgp2 (132 aa).

The signal sequence occupies residues 1–20 (MKYCFVFFVTLICLIANCSA). Disordered regions lie at residues 23 to 62 (EGDK…SNSR) and 87 to 132 (GASV…LGLP). The span at 36–47 (KQIERASDKTSE) shows a compositional bias: basic and acidic residues. The segment covering 51 to 62 (GNTNAQGDSNSR) has biased composition (polar residues). The segment covering 91–105 (PQLPDLPTTPSLPDM) has biased composition (low complexity).

It is found in the secreted. In Glossina morsitans morsitans (Savannah tsetse fly), this protein is Proline-rich protein sgp2 (sgp2).